The primary structure comprises 320 residues: Nicotianamine synthase 3 (320 aa).

The protein belongs to the nicotianamine synthase (NAS)-like family. As to expression, in shoots.

The enzyme catalyses 3 S-adenosyl-L-methionine = nicotianamine + 3 S-methyl-5'-thioadenosine + 3 H(+). Its function is as follows. Synthesizes nicotianamine, a polyamine which serves as a sensor for the physiological iron status within the plant, and/or might be involved in the transport of iron. The protein is Nicotianamine synthase 3 (NAS3) of Arabidopsis thaliana (Mouse-ear cress).